Reading from the N-terminus, the 276-residue chain is Protein PXR1 (276 aa).

Positions 1–23 (MGLAGTKIKQRFGNDPRNTNWSN) are disordered. The region spanning 25-71 (TSRFGHQYLAKMGWQQGSGLGLVSHALTTHVKVSIKDDNLGLGAKLH) is the G-patch domain. A compositionally biased stretch (basic and acidic residues) spans 152–172 (DDGKKSRKRKADESETKEDKK). The interval 152–261 (DDGKKSRKRK…SKWIKQKRAS (110 aa)) is disordered. Residues 173 to 218 (TLKKHKKEKKDKKEKKEKKKKKEKKDKKDKKDKKNKKDKKDKKDKK) show a composition bias toward basic residues. The span at 219-228 (DKKDKIRTGS) shows a compositional bias: basic and acidic residues. Positions 229–239 (DETLVSKESSA) are enriched in polar residues.

It belongs to the PINX1 family.

It localises to the nucleus. It is found in the nucleolus. Functionally, involved in rRNA-processing at A0, A1 and A2 sites and negatively regulates telomerase. This chain is Protein PXR1 (PXR1), found in Candida albicans (strain SC5314 / ATCC MYA-2876) (Yeast).